Reading from the N-terminus, the 454-residue chain is Phosphoglucosamine mutase (454 aa).

Catalysis depends on Ser-101, which acts as the Phosphoserine intermediate. Residues Ser-101, Asp-243, Asp-245, and Asp-247 each coordinate Mg(2+). Ser-101 is subject to Phosphoserine.

The protein belongs to the phosphohexose mutase family. Mg(2+) serves as cofactor. Activated by phosphorylation.

The enzyme catalyses alpha-D-glucosamine 1-phosphate = D-glucosamine 6-phosphate. Catalyzes the conversion of glucosamine-6-phosphate to glucosamine-1-phosphate. This is Phosphoglucosamine mutase from Geotalea daltonii (strain DSM 22248 / JCM 15807 / FRC-32) (Geobacter daltonii).